The sequence spans 599 residues: Stromal 70 kDa heat shock-related protein, chloroplastic (599 aa).

The segment at 545–573 is disordered; that stretch reads NQPGAGGEPGAAQAQHQEQSSARQIQRAK. The segment covering 554 to 568 has biased composition (low complexity); the sequence is GAAQAQHQEQSSARQ.

Belongs to the heat shock protein 70 family.

The protein localises to the plastid. It localises to the chloroplast stroma. Its function is as follows. Interacts with newly imported chloroplast proteins to assist in their maturation. The polypeptide is Stromal 70 kDa heat shock-related protein, chloroplastic (CHSP70) (Spinacia oleracea (Spinach)).